Consider the following 160-residue polypeptide: Cytochrome b6-f complex subunit 4 (160 aa).

3 helical membrane-spanning segments follow: residues 36-56 (LLYT…GLAV), 95-115 (LLGV…PFIE), and 131-151 (TVFL…TLPI).

The protein belongs to the cytochrome b family. PetD subfamily. As to quaternary structure, the 4 large subunits of the cytochrome b6-f complex are cytochrome b6, subunit IV (17 kDa polypeptide, petD), cytochrome f and the Rieske protein, while the 4 small subunits are petG, petL, petM and petN. The complex functions as a dimer.

It localises to the plastid. It is found in the chloroplast thylakoid membrane. In terms of biological role, component of the cytochrome b6-f complex, which mediates electron transfer between photosystem II (PSII) and photosystem I (PSI), cyclic electron flow around PSI, and state transitions. The polypeptide is Cytochrome b6-f complex subunit 4 (Mesostigma viride (Green alga)).